Here is a 480-residue protein sequence, read N- to C-terminus: Flap endonuclease 1 (480 aa).

Positions 1–106 are N-domain; it reads MGIKGLTKFI…SELEKRGEKR (106 aa). Position 34 (aspartate 34) interacts with Mg(2+). Positions 47 and 72 each coordinate DNA. Mg(2+)-binding residues include aspartate 88, glutamate 160, glutamate 162, aspartate 181, and aspartate 183. Residues 124–266 are I-domain; it reads EIKKQSGRTV…KTAYNLIKEY (143 aa). Glutamate 160 contacts DNA. 2 residues coordinate DNA: glycine 244 and aspartate 246. Aspartate 246 contacts Mg(2+). The interaction with PCNA stretch occupies residues 349–357; it reads TQRRLDTFF. The interval 379 to 461 is disordered; sequence TKGKGKKREI…NIKNENVKED (83 aa). The segment covering 404 to 428 has biased composition (basic and acidic residues); sequence NVKDEKKNNEKVDELKNKSDENLVK. Residues 429-438 show a composition bias toward acidic residues; that stretch reads DEEDDQDDYD.

This sequence belongs to the XPG/RAD2 endonuclease family. FEN1 subfamily. As to quaternary structure, interacts with PCNA. Three molecules of FEN1 bind to one PCNA trimer with each molecule binding to one PCNA monomer. PCNA stimulates the nuclease activity without altering cleavage specificity. Mg(2+) is required as a cofactor. Post-translationally, phosphorylated. Phosphorylation upon DNA damage induces relocalization to the nuclear plasma.

It is found in the nucleus. It localises to the nucleolus. Its subcellular location is the nucleoplasm. The protein localises to the mitochondrion. Its activity is regulated as follows. Inhibited by monovalent metal ions. Its function is as follows. Structure-specific nuclease with 5'-flap endonuclease and 5'-3' exonuclease activities involved in DNA replication and repair. During DNA replication, cleaves the 5'-overhanging flap structure that is generated by displacement synthesis when DNA polymerase encounters the 5'-end of a downstream Okazaki fragment. It enters the flap from the 5'-end and then tracks to cleave the flap base, leaving a nick for ligation. Also involved in the long patch base excision repair (LP-BER) pathway, by cleaving within the apurinic/apyrimidinic (AP) site-terminated flap. Acts as a genome stabilization factor that prevents flaps from equilibrating into structures that lead to duplications and deletions. Also possesses 5'-3' exonuclease activity on nicked or gapped double-stranded DNA, and exhibits RNase H activity. Also involved in replication and repair of rDNA and in repairing mitochondrial DNA. The chain is Flap endonuclease 1 from Plasmodium yoelii yoelii.